Here is a 222-residue protein sequence, read N- to C-terminus: Ribosomal RNA small subunit methyltransferase I (222 aa).

This sequence belongs to the methyltransferase superfamily. RsmI family.

The protein localises to the cytoplasm. The enzyme catalyses cytidine(1402) in 16S rRNA + S-adenosyl-L-methionine = 2'-O-methylcytidine(1402) in 16S rRNA + S-adenosyl-L-homocysteine + H(+). Functionally, catalyzes the 2'-O-methylation of the ribose of cytidine 1402 (C1402) in 16S rRNA. This is Ribosomal RNA small subunit methyltransferase I from Mycoplasmopsis pulmonis (strain UAB CTIP) (Mycoplasma pulmonis).